The sequence spans 232 residues: Lipoprotein-releasing system ATP-binding protein LolD (232 aa).

The ABC transporter domain occupies 11–231 (VYLHDIRRQY…SLENGHVVEL (221 aa)). 47-54 (APSGSGKS) is a binding site for ATP.

This sequence belongs to the ABC transporter superfamily. Lipoprotein translocase (TC 3.A.1.125) family. In terms of assembly, the complex is composed of two ATP-binding proteins (LolD) and two transmembrane proteins (LolC and LolE).

The protein resides in the cell inner membrane. In terms of biological role, part of the ABC transporter complex LolCDE involved in the translocation of mature outer membrane-directed lipoproteins, from the inner membrane to the periplasmic chaperone, LolA. Responsible for the formation of the LolA-lipoprotein complex in an ATP-dependent manner. The chain is Lipoprotein-releasing system ATP-binding protein LolD from Nitrobacter hamburgensis (strain DSM 10229 / NCIMB 13809 / X14).